The sequence spans 210 residues: Probable nicotinate-nucleotide adenylyltransferase (210 aa).

This sequence belongs to the NadD family.

It catalyses the reaction nicotinate beta-D-ribonucleotide + ATP + H(+) = deamido-NAD(+) + diphosphate. It participates in cofactor biosynthesis; NAD(+) biosynthesis; deamido-NAD(+) from nicotinate D-ribonucleotide: step 1/1. Its function is as follows. Catalyzes the reversible adenylation of nicotinate mononucleotide (NaMN) to nicotinic acid adenine dinucleotide (NaAD). This Streptococcus pyogenes serotype M3 (strain ATCC BAA-595 / MGAS315) protein is Probable nicotinate-nucleotide adenylyltransferase.